The primary structure comprises 493 residues: UDP-N-acetylmuramoyl-L-alanyl-D-glutamate--2,6-diaminopimelate ligase (493 aa).

Leu-30 and Ser-32 together coordinate UDP-N-acetyl-alpha-D-muramoyl-L-alanyl-D-glutamate. 117 to 123 contacts ATP; that stretch reads GTNGKTT. Residues Asn-158, 159–160, Ser-186, Gln-192, and Arg-194 each bind UDP-N-acetyl-alpha-D-muramoyl-L-alanyl-D-glutamate; that span reads TT. At Lys-226 the chain carries N6-carboxylysine. Meso-2,6-diaminopimelate contacts are provided by residues Arg-388, 412 to 415, Gly-463, and Glu-467; that span reads DNPR. Positions 412-415 match the Meso-diaminopimelate recognition motif motif; that stretch reads DNPR.

The protein belongs to the MurCDEF family. MurE subfamily. Requires Mg(2+) as cofactor. Carboxylation is probably crucial for Mg(2+) binding and, consequently, for the gamma-phosphate positioning of ATP.

Its subcellular location is the cytoplasm. The catalysed reaction is UDP-N-acetyl-alpha-D-muramoyl-L-alanyl-D-glutamate + meso-2,6-diaminopimelate + ATP = UDP-N-acetyl-alpha-D-muramoyl-L-alanyl-gamma-D-glutamyl-meso-2,6-diaminopimelate + ADP + phosphate + H(+). Its pathway is cell wall biogenesis; peptidoglycan biosynthesis. Functionally, catalyzes the addition of meso-diaminopimelic acid to the nucleotide precursor UDP-N-acetylmuramoyl-L-alanyl-D-glutamate (UMAG) in the biosynthesis of bacterial cell-wall peptidoglycan. This is UDP-N-acetylmuramoyl-L-alanyl-D-glutamate--2,6-diaminopimelate ligase from Vibrio vulnificus (strain YJ016).